Reading from the N-terminus, the 4158-residue chain is Dynein axonemal heavy chain 6 (4158 aa).

The segment at 1–1433 is stem; that stretch reads MTFRATDSEF…VARMALSQYT (1433 aa). 192–199 is a binding site for ATP; the sequence is IIRENEHL. Positions 805–859 form a coiled coil; the sequence is CVHLGSDLEELNNEVNEVKLQAQDPQILDISADQDKIRLILNNLQSVLADLQKRA. AAA regions lie at residues 1434 to 1655, 1715 to 1948, 2058 to 2306, and 2408 to 2659; these read YGYE…VLVM, STIV…KKCS, KYNR…CVQG, and DYNL…LRRR. ATP-binding positions include 1472-1479, 1753-1760, 2096-2103, and 2447-2454; these read GPAGTGKT, GPTGGGKT, GITGVGKS, and GVGGTGKQ. Residues 2676–2961 form a stalk region; the sequence is SMLSEKRKQI…KTMALTKARL (286 aa). Positions 2901 to 2996 form a coiled coil; the sequence is KRQKLRAAQA…EEISNITGNV (96 aa). AAA stretches follow at residues 3042–3272 and 3509–3730; these read LGDP…AIKT and LTDF…NLKL.

This sequence belongs to the dynein heavy chain family. In terms of assembly, the dynein complex consists of at least two heavy chains and a number of intermediate and light chains. Expressed in several tissues, including brain, pituitary, testis and trachea, with highest levels in testis.

The protein resides in the cytoplasm. It is found in the cytoskeleton. Its subcellular location is the cilium axoneme. In terms of biological role, force generating protein of respiratory cilia. Produces force towards the minus ends of microtubules. Dynein has ATPase activity; the force-producing power stroke is thought to occur on release of ADP. This Homo sapiens (Human) protein is Dynein axonemal heavy chain 6.